Here is a 554-residue protein sequence, read N- to C-terminus: 3-(3-hydroxy-phenyl)propionate/3-hydroxycinnamic acid hydroxylase (554 aa).

Residues Gln17–Lys46 and Phe285–Asp295 contribute to the FAD site.

The protein belongs to the PheA/TfdB FAD monooxygenase family. It depends on FAD as a cofactor.

It carries out the reaction 3-(3-hydroxyphenyl)propanoate + NADH + O2 + H(+) = 3-(2,3-dihydroxyphenyl)propanoate + NAD(+) + H2O. It catalyses the reaction (2E)-3-(3-hydroxyphenyl)prop-2-enoate + NADH + O2 + H(+) = (2E)-3-(2,3-dihydroxyphenyl)prop-2-enoate + NAD(+) + H2O. The protein operates within aromatic compound metabolism; 3-phenylpropanoate degradation. Catalyzes the insertion of one atom of molecular oxygen into position 2 of the phenyl ring of 3-(3-hydroxyphenyl)propionate (3-HPP) and hydroxycinnamic acid (3HCI). The sequence is that of 3-(3-hydroxy-phenyl)propionate/3-hydroxycinnamic acid hydroxylase from Escherichia coli O157:H7.